We begin with the raw amino-acid sequence, 240 residues long: UDP-2,3-diacylglucosamine hydrolase (240 aa).

The Mn(2+) site is built by Asp8, His10, Asp41, Asn79, and His114. 79–80 serves as a coordination point for substrate; sequence NR. Substrate contacts are provided by Asp122, Ser160, Asn164, Lys167, and His195. Mn(2+) contacts are provided by His195 and His197.

This sequence belongs to the LpxH family. Requires Mn(2+) as cofactor.

It localises to the cell inner membrane. It carries out the reaction UDP-2-N,3-O-bis[(3R)-3-hydroxytetradecanoyl]-alpha-D-glucosamine + H2O = 2-N,3-O-bis[(3R)-3-hydroxytetradecanoyl]-alpha-D-glucosaminyl 1-phosphate + UMP + 2 H(+). It functions in the pathway glycolipid biosynthesis; lipid IV(A) biosynthesis; lipid IV(A) from (3R)-3-hydroxytetradecanoyl-[acyl-carrier-protein] and UDP-N-acetyl-alpha-D-glucosamine: step 4/6. In terms of biological role, hydrolyzes the pyrophosphate bond of UDP-2,3-diacylglucosamine to yield 2,3-diacylglucosamine 1-phosphate (lipid X) and UMP by catalyzing the attack of water at the alpha-P atom. Involved in the biosynthesis of lipid A, a phosphorylated glycolipid that anchors the lipopolysaccharide to the outer membrane of the cell. This Enterobacter sp. (strain 638) protein is UDP-2,3-diacylglucosamine hydrolase.